A 301-amino-acid chain; its full sequence is Probable cyclic nucleotide phosphodiesterase RER_40650 (301 aa).

Asp20, His22, Asp61, Asn95, His167, His205, and His207 together coordinate Fe cation. AMP-binding positions include His22, Asp61, and 95–96 (NH). AMP is bound at residue His207.

The protein belongs to the cyclic nucleotide phosphodiesterase class-III family. It depends on Fe(2+) as a cofactor.

This Rhodococcus erythropolis (strain PR4 / NBRC 100887) protein is Probable cyclic nucleotide phosphodiesterase RER_40650.